A 562-amino-acid chain; its full sequence is Arginine--tRNA ligase 1 (562 aa).

A 'HIGH' region motif is present at residues 122-132; the sequence is PNIAKPFSMGH.

This sequence belongs to the class-I aminoacyl-tRNA synthetase family. As to quaternary structure, monomer.

It localises to the cytoplasm. The catalysed reaction is tRNA(Arg) + L-arginine + ATP = L-arginyl-tRNA(Arg) + AMP + diphosphate. This is Arginine--tRNA ligase 1 from Bacillus cereus (strain ZK / E33L).